The chain runs to 156 residues: Cyanate hydratase (156 aa).

Active-site residues include Arg-96, Glu-99, and Ser-122.

This sequence belongs to the cyanase family.

The enzyme catalyses cyanate + hydrogencarbonate + 3 H(+) = NH4(+) + 2 CO2. Functionally, catalyzes the reaction of cyanate with bicarbonate to produce ammonia and carbon dioxide. This Burkholderia orbicola (strain MC0-3) protein is Cyanate hydratase.